A 360-amino-acid chain; its full sequence is Glutaminyl-peptide cyclotransferase (360 aa).

The N-terminal stretch at 1 to 23 is a signal peptide; it reads MKYLKILIIVTIFFFLLINVINC. N-linked (GlcNAc...) asparagine glycosylation is present at N135. D165 lines the Zn(2+) pocket. E199 (proton acceptor) is an active-site residue. E200 contributes to the Zn(2+) binding site. The Proton acceptor role is filled by D251. H330 lines the Zn(2+) pocket.

Belongs to the glutaminyl-peptide cyclotransferase family.

Its subcellular location is the secreted. The catalysed reaction is N-terminal L-glutaminyl-[peptide] = N-terminal 5-oxo-L-prolyl-[peptide] + NH4(+). Responsible for the biosynthesis of pyroglutamyl peptides. Has a bias against acidic and tryptophan residues adjacent to the N-terminal glutaminyl residue and a lack of importance of chain length after the second residue. Also catalyzes N-terminal pyroglutamate formation. The chain is Glutaminyl-peptide cyclotransferase (qpct) from Dictyostelium discoideum (Social amoeba).